Consider the following 730-residue polypeptide: Elongation factor 2 (730 aa).

The tr-type G domain occupies 19-229 (DYIRNIGIVA…NITFKDIIQY (211 aa)). GTP is bound by residues 28 to 35 (AHIDHGKT), 94 to 98 (DTPGH), and 148 to 151 (NKVD). Position 597 is a diphthamide (histidine 597).

Belongs to the TRAFAC class translation factor GTPase superfamily. Classic translation factor GTPase family. EF-G/EF-2 subfamily.

It localises to the cytoplasm. Functionally, catalyzes the GTP-dependent ribosomal translocation step during translation elongation. During this step, the ribosome changes from the pre-translocational (PRE) to the post-translocational (POST) state as the newly formed A-site-bound peptidyl-tRNA and P-site-bound deacylated tRNA move to the P and E sites, respectively. Catalyzes the coordinated movement of the two tRNA molecules, the mRNA and conformational changes in the ribosome. This is Elongation factor 2 from Methanosphaera stadtmanae (strain ATCC 43021 / DSM 3091 / JCM 11832 / MCB-3).